Here is a 44-residue protein sequence, read N- to C-terminus: SPbeta prophage-derived uncharacterized protein YosI (44 aa).

This is SPbeta prophage-derived uncharacterized protein YosI (yosI) from Bacillus subtilis (strain 168).